A 340-amino-acid chain; its full sequence is MIKVGIVGATGYTGLELIRLLNNHPNAKIIALCSRVNTGKAVIEEFPSLIGYVDLDFIIPDDKTLFECDVIFFATPHGVAMNSVGQFLDKGIKIIDLSADFRIKDSSTWSKWYGIVHTQSALLKNAVYGLPEVYSSQIKNATLVANPGCYPTAIILALKPLLKANSINTKSIIADCKSGVSGAGRNSNIATLFCEVNESLKPYNVNQHRHKPEAQQVLTDIANTDVDFIFTPHLIPMTRGMLASVYVDLTKDIDVQELFKNHYQDNRFVHVLSVGVYPQTKSVKGTNNCHIGIQKSNNKLIIMTVIDNINKGASGQAIQNMNLMFGIDEGLGLEQIGLLP.

Cysteine 149 is a catalytic residue.

The protein belongs to the NAGSA dehydrogenase family. Type 1 subfamily.

The protein resides in the cytoplasm. It carries out the reaction N-acetyl-L-glutamate 5-semialdehyde + phosphate + NADP(+) = N-acetyl-L-glutamyl 5-phosphate + NADPH + H(+). The protein operates within amino-acid biosynthesis; L-arginine biosynthesis; N(2)-acetyl-L-ornithine from L-glutamate: step 3/4. Its function is as follows. Catalyzes the NADPH-dependent reduction of N-acetyl-5-glutamyl phosphate to yield N-acetyl-L-glutamate 5-semialdehyde. This chain is N-acetyl-gamma-glutamyl-phosphate reductase, found in Ruthia magnifica subsp. Calyptogena magnifica.